A 318-amino-acid polypeptide reads, in one-letter code: MANTLEQLKLYTTIVADTGDIEAIKRYQPEDATTNPSLILKAAQIPEYESLIDNAIDWAKSQSDDLAQQLDDASDKLAVNIGVEILKLVPGRISTEVDARLSFDKEQSIAKAHKLVRLYKEAGVDKSRILIKLASTWEGICAARELEKEGINCNLTLLFSFAQARACAEAGAYLISPFVGRILDWYKKDTGKDYDAVNDPGVISVTEIYNYYKQHGFNTVVMGASFRNIGEIIELAGCDRLTIGPSLLEELANSQVDITPKLVAATSTVAAEAPLTEAQFRWDFNQDPMAVDKLAEGIRNFAIDQGKLEVMLTAKLAN.

Residue K132 is the Schiff-base intermediate with substrate of the active site.

The protein belongs to the transaldolase family. Type 1 subfamily. Homodimer.

Its subcellular location is the cytoplasm. The enzyme catalyses D-sedoheptulose 7-phosphate + D-glyceraldehyde 3-phosphate = D-erythrose 4-phosphate + beta-D-fructose 6-phosphate. Its pathway is carbohydrate degradation; pentose phosphate pathway; D-glyceraldehyde 3-phosphate and beta-D-fructose 6-phosphate from D-ribose 5-phosphate and D-xylulose 5-phosphate (non-oxidative stage): step 2/3. Its function is as follows. Transaldolase is important for the balance of metabolites in the pentose-phosphate pathway. The sequence is that of Transaldolase from Shewanella baltica (strain OS195).